We begin with the raw amino-acid sequence, 247 residues long: Carboxy-S-adenosyl-L-methionine synthase (247 aa).

S-adenosyl-L-methionine contacts are provided by residues tyrosine 39, 64–66 (GCS), 117–118 (DI), asparagine 132, and arginine 199.

This sequence belongs to the class I-like SAM-binding methyltransferase superfamily. Cx-SAM synthase family. Homodimer.

The catalysed reaction is prephenate + S-adenosyl-L-methionine = carboxy-S-adenosyl-L-methionine + 3-phenylpyruvate + H2O. In terms of biological role, catalyzes the conversion of S-adenosyl-L-methionine (SAM) to carboxy-S-adenosyl-L-methionine (Cx-SAM). The chain is Carboxy-S-adenosyl-L-methionine synthase from Aeromonas salmonicida (strain A449).